Reading from the N-terminus, the 296-residue chain is 4-hydroxybenzoate octaprenyltransferase (296 aa).

The next 8 helical transmembrane spans lie at 28–48 (PIGIYLLLWPTLWALWIAGKG), 52–72 (LINIVIFVLGVVLTRAGGCVI), 102–122 (ALVFFAVLMGISFLLVLLTNA), 146–166 (YYPQVVLGAAFSWGMPMAFTA), 169–189 (GDLPATAWLLYIANLLWTVGY), 219–239 (VIILTLQGLSLVCLLLAGARF), 241–261 (LGGWFHLGLLAAAGCFAWEFW), and 275–295 (FLHNHWAGLAIFVGIVADYAF).

The protein belongs to the UbiA prenyltransferase family. It depends on Mg(2+) as a cofactor.

It localises to the cell inner membrane. The catalysed reaction is all-trans-octaprenyl diphosphate + 4-hydroxybenzoate = 4-hydroxy-3-(all-trans-octaprenyl)benzoate + diphosphate. Its pathway is cofactor biosynthesis; ubiquinone biosynthesis. Its function is as follows. Catalyzes the prenylation of para-hydroxybenzoate (PHB) with an all-trans polyprenyl group. Mediates the second step in the final reaction sequence of ubiquinone-8 (UQ-8) biosynthesis, which is the condensation of the polyisoprenoid side chain with PHB, generating the first membrane-bound Q intermediate 3-octaprenyl-4-hydroxybenzoate. The polypeptide is 4-hydroxybenzoate octaprenyltransferase (Pseudomonas fluorescens (strain SBW25)).